A 70-amino-acid polypeptide reads, in one-letter code: Brevinin-ALb (70 aa).

The first 22 residues, Met1–Cys22, serve as a signal peptide directing secretion. Residues Glu23–Arg46 constitute a propeptide that is removed on maturation. Cys64 and Cys70 are joined by a disulfide.

As to expression, expressed by the skin glands.

It is found in the secreted. Functionally, antimicrobial peptide with activity against Gram-positive and Gram-negative bacteria and against fungi. Has been tested against S.aureus (MIC=5.5 ug/mL), E.coli (MIC=6.5 ug/mL), B.dysenteriae (MIC=2.2 ug/mL), and C.albicans (MIC=7.5 ug/mL). Can regulate or mediate antimicrobial response by stimulating mast cell degranulation. Induces histamine release. Shows cytotoxicity toward solid tumor cell line HepG2. Also shows a potent hemolytic activity (LD(50)=5 ug/ml). The chain is Brevinin-ALb from Amolops loloensis (Lolokou Sucker Frog).